The primary structure comprises 417 residues: mRNA cap guanine-N(7) methyltransferase (417 aa).

The mRNA cap 0 methyltransferase domain maps to Ser-129 to Val-412. Asn-138 to Asn-139 is a binding site for mRNA. S-adenosyl-L-methionine is bound by residues Lys-142, Gly-160, Asp-182, Asp-211, Gln-237, and Tyr-242.

It belongs to the class I-like SAM-binding methyltransferase superfamily. mRNA cap 0 methyltransferase family.

The protein localises to the nucleus. The enzyme catalyses a 5'-end (5'-triphosphoguanosine)-ribonucleoside in mRNA + S-adenosyl-L-methionine = a 5'-end (N(7)-methyl 5'-triphosphoguanosine)-ribonucleoside in mRNA + S-adenosyl-L-homocysteine. In terms of biological role, responsible for methylating the 5'-cap structure of mRNAs. This Candida glabrata (strain ATCC 2001 / BCRC 20586 / JCM 3761 / NBRC 0622 / NRRL Y-65 / CBS 138) (Yeast) protein is mRNA cap guanine-N(7) methyltransferase (ABD1).